Consider the following 586-residue polypeptide: MMIAERGVRASARGVLSLHHIGKTYPRVMPRSKRGVWGMFGHPGRRAVDDAHTAHGPCSGARETDAAEHSVLSDVNLSFFTGEIHALLGKNGAGKSTLAHILSGFCVPTHGQLRLDGKEQRFSVPFDALRAGIGIVHQQPVFAERATVFENVVMGSAALTGVRWVRRAQVRERIDRIIAQWRMPLKKEEYVACLSADKRFFVSLLCVLFRNPRFIILDEPRCAPAQSRAVFFSHLEEFFVRSSHAPRCGGGVIVVTHRFADALRWAQRISLIEGGKACSFLRTDLLDEYCSAHQVNECIQKVSCALMSASTVTSSAVSSFSSLSDTQSCATVPRTSSARPWVLRVESLQVSKHADVPLTDISFSVAASAIIGIVGTPEDGVHVLEDILCDMHAGASRTHCTGNILLQEHDQVWCLPLQRNTPSLLRAHGVACVPSNCIQRGASMQLTLFDLLVPYTLRTWRTRVRAQMRFVARLLAEEEIYCDPLQPACTLSGGQLQRVILARELATRPRLLILAEPAEGLDSASEQRLLARLRQVAQAGTALVLLAREQHQAQWRALCTERFLLRAGTLCAEVSGTPSPSQDSHT.

ABC transporter domains follow at residues 46 to 299 and 343 to 586; these read RAVD…NECI and LRVE…DSHT. 89-96 is an ATP binding site; it reads GKNGAGKS.

Belongs to the ABC transporter superfamily. In terms of assembly, the complex is probably composed of two ATP-binding proteins (RfuB), two transmembrane proteins (RfuC and RfuD) and a solute-binding protein (RfuA).

It is found in the cell inner membrane. In terms of biological role, probably part of the ABC transporter complex RfuABCD involved in riboflavin import. Probably responsible for energy coupling to the transport system. The sequence is that of Probable riboflavin import ATP-binding protein RfuB from Treponema pallidum (strain Nichols).